The following is a 156-amino-acid chain: Probable cyclic pyranopterin monophosphate synthase (156 aa).

Substrate contacts are provided by residues 74-76 (LCH) and 110-111 (ME). Aspartate 125 is a catalytic residue.

Belongs to the MoaC family. As to quaternary structure, homohexamer; trimer of dimers.

The catalysed reaction is (8S)-3',8-cyclo-7,8-dihydroguanosine 5'-triphosphate = cyclic pyranopterin phosphate + diphosphate. Its pathway is cofactor biosynthesis; molybdopterin biosynthesis. In terms of biological role, catalyzes the conversion of (8S)-3',8-cyclo-7,8-dihydroguanosine 5'-triphosphate to cyclic pyranopterin monophosphate (cPMP). The protein is Probable cyclic pyranopterin monophosphate synthase of Thermococcus kodakarensis (strain ATCC BAA-918 / JCM 12380 / KOD1) (Pyrococcus kodakaraensis (strain KOD1)).